A 77-amino-acid chain; its full sequence is Translation initiation factor IF-1, chloroplastic (77 aa).

The S1-like domain maps to 1–71; sequence MKEQKLIHEG…TRGRIIYRLR (71 aa).

Belongs to the IF-1 family. Component of the 30S ribosomal translation pre-initiation complex which assembles on the 30S ribosome in the order IF-2 and IF-3, IF-1 and N-formylmethionyl-tRNA(fMet); mRNA recruitment can occur at any time during PIC assembly.

The protein localises to the plastid. Its subcellular location is the chloroplast. Its function is as follows. One of the essential components for the initiation of protein synthesis. Stabilizes the binding of IF-2 and IF-3 on the 30S subunit to which N-formylmethionyl-tRNA(fMet) subsequently binds. Helps modulate mRNA selection, yielding the 30S pre-initiation complex (PIC). Upon addition of the 50S ribosomal subunit IF-1, IF-2 and IF-3 are released leaving the mature 70S translation initiation complex. The polypeptide is Translation initiation factor IF-1, chloroplastic (Cabomba caroliniana (Carolina fanwort)).